The primary structure comprises 529 residues: RE1-silencing transcription factor B (529 aa).

The segment at 156 to 178 (FRCKPCQYKAESEEEFVHHIKIH) adopts a C2H2-type 1 zinc-finger fold. The disordered stretch occupies residues 188 to 210 (SNKKAQGNEADSSISEESDVSKG). C2H2-type zinc fingers lie at residues 212 to 234 (IQCDRCGYNTNRFDHYLAHLKHH), 244 to 266 (YKCTICTYTTVSEYHWKKHLRNH), 272 to 294 (YTCSQCSYFSDRKNNYIQHIRTH), 300 to 322 (YQCILCPYSSSQKTHLTRHMRTH), 328 to 351 (FKCEQCSYVASNQHEVTRHARQVH), 357 to 379 (LTCPHCDYKTADRSNFKKHVELH), and 385 to 408 (FLCPVCDYAASKKCNLQYHIKSRH). The disordered stretch occupies residues 484–529 (LSSTQKKIKTSDARPEKILDKSRKSSCVKRKSDLLENSNDTQTSTV). The span at 492-506 (KTSDARPEKILDKSR) shows a compositional bias: basic and acidic residues. Positions 518–529 (LENSNDTQTSTV) are enriched in polar residues.

The protein resides in the nucleus. Its subcellular location is the cytoplasm. Its function is as follows. Transcriptional repressor which binds neuron-restrictive silencer element (NRSE) and represses neuronal gene transcription in non-neuronal cells. Plays a role in the early development of the nervous system and is required for proper patterning of the neuroectoderm during gastrulation. This involves the correct speciation of the neuroepithelial domain and adequate development of the non-neural ectoderm. The protein is RE1-silencing transcription factor B (rest-b) of Xenopus laevis (African clawed frog).